The chain runs to 489 residues: MSIDDVIYVICLLGCIGAGSYVKKIADEGQRKLVSTGLGVLVVVIVSGLHSLHCFVSLALGTAAVLLVHPSKGHLVTFAVMFGYLVFFRIFDFYFGIPGHTNMIQMILTLKVSGIAFEKTAAWKRLQAHDEQKKNDQRDVHQESPIEITDYDVELQSLSAAEILHYSFNYIGVLTGPYYRYRTYRDYFEMPFKTYAPTVEATLEKLKYAVFYCALYLATNYMWPLDYALSDEFFNDRSFVYRLLYVWPTFFTFRARIYTGLTLSECVCTMAGFGAYPDESDPNNGEGPRKRYQHLKRDADKHTYNFTTIVNTRVLEVERCWTFREGMKHWNVCVQYWLAVNVYKLFPSKKYRTGATLLCSAYWHGFRPGHYFCIMGAPFYVSLEDMWDKLVRKSATGTSRRVIDVIFWIFKWFAFSYLGEAFLLSSFGNIWRFYSSVYHIGYISWAAMTALGFYLTSQRKAAERRKKRAAEKAAGGDGIAAAIEKEKAQ.

The next 3 helical transmembrane spans lie at 2–22 (SIDDVIYVICLLGCIGAGSYV), 40–60 (VLVVVIVSGLHSLHCFVSLAL), and 75–95 (LVTFAVMFGYLVFFRIFDFYF). Catalysis depends on residues asparagine 331 and histidine 364. A run of 2 helical transmembrane segments spans residues 405-425 (VIFWIFKWFAFSYLGEAFLLS) and 433-453 (FYSSVYHIGYISWAAMTALGF).

Belongs to the membrane-bound acyltransferase family.

It localises to the membrane. The enzyme catalyses a 1-acyl-sn-glycero-3-phospho-(1D-myo-inositol) + (5Z,8Z,11Z,14Z)-eicosatetraenoyl-CoA = a 1-acyl-2-(5Z,8Z,11Z,14Z-eicosatetraenoyl)-sn-glycero-3-phospho-(1D-myo-inositol) + CoA. It carries out the reaction a 1-acyl-sn-glycero-3-phosphocholine + an acyl-CoA = a 1,2-diacyl-sn-glycero-3-phosphocholine + CoA. It catalyses the reaction (9Z)-hexadecenoyl-CoA + 1-hexadecanoyl-sn-glycero-3-phosphocholine = 1-hexadecanoyl-2-(9Z-hexadecenoyl)-sn-glycero-3-phosphocholine + CoA. The catalysed reaction is a 1-acyl-sn-glycero-3-phospho-L-serine + an acyl-CoA = a 1,2-diacyl-sn-glycero-3-phospho-L-serine + CoA. The enzyme catalyses 1-(9Z-octadecenoyl)-sn-glycero-3-phospho-L-serine + (9Z)-hexadecenoyl-CoA = 1-(9Z-octadecenoyl)-2-(9Z-hexadecenoyl)-sn-glycero-3-phospho-L-serine + CoA. It carries out the reaction a 1-acyl-sn-glycero-3-phosphoethanolamine + an acyl-CoA = a 1,2-diacyl-sn-glycero-3-phosphoethanolamine + CoA. It catalyses the reaction 1-hexadecanoyl-sn-glycero-3-phosphoethanolamine + (9Z)-hexadecenoyl-CoA = 1-hexadecanoyl-2-(9Z)-hexadecenoyl-sn-glycero-3-phosphoethanolamine + CoA. The protein operates within lipid metabolism; phospholipid metabolism. In terms of biological role, acyltransferase that mediates the acylation of lysophospholipids to produce phospholipids (glycerophospholipids). Highest activity with lysophosphatidylinositol (1-acyl-sn-glycero-3-phospho-(1D-myo-inositol) or LPI) producing phosphatidylinositol (1,2-diacyl-sn-glycero-3-phospho-(1D-myo-inositol) or PI) (LPIAT activity), but also converts lysophosphatidylcholine (1-acyl-sn-glycero-3-phosphocholine or LPC) to phosphatidylcholine (1,2-diacyl-sn-glycero-3-phosphocholine or PC) (LPCAT activity), lysophosphatidylserine (1-acyl-2-hydroxy-sn-glycero-3-phospho-L-serine or LPS) to phosphatidylserine (1,2-diacyl-sn-glycero-3-phospho-L-serine or PS) (LPSAT activity), and lysophosphatidylethanolamine (1-acyl-sn-glycero-3-phosphoethanolamine or LPE) producing phosphatidylethanolamine (1,2-diacyl-sn-glycero-3-phosphoethanolamine or PE) (LPEAT activity). Has a preference for unsaturated fatty acid arachidonoyl-CoA ((5Z,8Z,11Z,14Z)-eicosatetraenoyl-CoA). Glycerophospholipids are important structural and functional components of cellular membrane, acyl-chain remodeling regulates the molecular species distribution of glycerophospholipids which can affect membrane fluidity and curvature. In Drosophila melanogaster (Fruit fly), this protein is Membrane-bound acylglycerophosphatidylinositol O-acyltransferase frj.